Reading from the N-terminus, the 906-residue chain is Disintegrin and metalloproteinase domain-containing protein 22 (906 aa).

The signal sequence occupies residues 1–25 (MQAAVAVSVPFLLLCVLGTCPPARC). A propeptide spanning residues 26 to 222 (GQAGDASLME…KFILKPRPKR (197 aa)) is cleaved from the precursor. Asn175 carries N-linked (GlcNAc...) asparagine glycosylation. Residues 223 to 736 (SKRQLRRYPR…LSGNGVAGTN (514 aa)) are Extracellular-facing. In terms of domain architecture, Peptidase M12B spans 239–438 (KYIELMIVND…GGGACLFNKP (200 aa)). 17 cysteine pairs are disulfide-bonded: Cys349/Cys433, Cys392/Cys417, Cys394/Cys401, Cys447/Cys477, Cys458/Cys474, Cys460/Cys466, Cys473/Cys494, Cys485/Cys491, Cys490/Cys516, Cys503/Cys523, Cys510/Cys542, Cys535/Cys547, Cys554/Cys605, Cys569/Cys635, Cys583/Cys593, Cys600/Cys663, and Cys657/Cys668. In terms of domain architecture, Disintegrin spans 444-531 (PPECGNGFIE…QCAPNIHKMD (88 aa)). N-linked (GlcNAc...) asparagine glycosylation is present at Asn519. Asn634 carries N-linked (GlcNAc...) asparagine glycosylation. N-linked (GlcNAc...) asparagine glycosylation is present at Asn675. An EGF-like domain is found at 675 to 712 (NFSTCLSSKEGTICSGNGVCSNELKCVCNRHWIGSDCN). 3 disulfide bridges follow: Cys679–Cys694, Cys688–Cys700, and Cys702–Cys711. A helical transmembrane segment spans residues 737-757 (IIIGIIAGTILVLALILGITA). Residues 758-906 (WGYKNYREQR…QSARLWETSI (149 aa)) lie on the Cytoplasmic side of the membrane. Residues 785 to 906 (YSDIPPGVST…QSARLWETSI (122 aa)) form a disordered region. A compositionally biased stretch (low complexity) spans 793–810 (STNSASSSKKRSNGLSHS). Position 810 is a phosphoserine (Ser810). The span at 811–829 (WSERIPDTKHISDICENGR) shows a compositional bias: basic and acidic residues. Ser834 carries the phosphoserine modification. Residues 842-853 (NKKKIRGKRFRP) are compositionally biased toward basic residues. Ser857, Ser862, Ser866, and Ser870 each carry phosphoserine. Positions 862–877 (SPAKSPSSSTGSIASS) are enriched in low complexity.

Interacts with LGI1. Interacts with DLG4/PSD95. Also binds LGI4. Interacts with KCNA2 and DLG2. Interacts with ADAM11. Interacts (via C-terminus) with YWHAB/14-3-3 beta. Interacts (via C-terminus) with YWHAZ/14-3-3 zeta. Post-translationally, the precursor is cleaved by a furin endopeptidase. In terms of tissue distribution, highly expressed in the brain and in some high-grade but not low-grade gliomas. Detected slightly or not at all in other tissues.

The protein resides in the cell membrane. Its subcellular location is the cell projection. It is found in the axon. In terms of biological role, probable ligand for integrin in the brain. This is a non catalytic metalloprotease-like protein. Involved in regulation of cell adhesion and spreading and in inhibition of cell proliferation. Neuronal receptor for LGI1. This chain is Disintegrin and metalloproteinase domain-containing protein 22 (ADAM22), found in Homo sapiens (Human).